Here is a 198-residue protein sequence, read N- to C-terminus: FMN-dependent NADH:quinone oxidoreductase 2 (198 aa).

Residue 136 to 139 participates in FMN binding; that stretch reads SRGG.

This sequence belongs to the azoreductase type 1 family. Homodimer. The cofactor is FMN.

The enzyme catalyses 2 a quinone + NADH + H(+) = 2 a 1,4-benzosemiquinone + NAD(+). The catalysed reaction is N,N-dimethyl-1,4-phenylenediamine + anthranilate + 2 NAD(+) = 2-(4-dimethylaminophenyl)diazenylbenzoate + 2 NADH + 2 H(+). Functionally, quinone reductase that provides resistance to thiol-specific stress caused by electrophilic quinones. In terms of biological role, also exhibits azoreductase activity. Catalyzes the reductive cleavage of the azo bond in aromatic azo compounds to the corresponding amines. The protein is FMN-dependent NADH:quinone oxidoreductase 2 of Clostridium perfringens (strain 13 / Type A).